The following is a 431-amino-acid chain: Ammonium transporter 3 (431 aa).

The Extracellular portion of the chain corresponds to 1–27 (MEQFSTSSSESSDSSSEYSLEFYMDTS). A helical transmembrane segment spans residues 28–48 (WVLDAANLVFFMQAGFGMLEA). At 49 to 63 (GMVRAKNTKSILLKN) the chain is on the cytoplasmic side. The chain crosses the membrane as a helical span at residues 64–84 (LINTAICAISYYCVGHSFAYG). Over 85–102 (KVNPNSFVGFGNFFLMDY) the chain is Extracellular. A helical membrane pass occupies residues 103 to 125 (THYAYWMIQWAYAATATTIATGA). Over 126–134 (MAERLQLHC) the chain is Cytoplasmic. The chain crosses the membrane as a helical span at residues 135–155 (YILFTLVQTILIYPFVAHWIW). The Extracellular segment spans residues 156 to 160 (SQNGW). A helical membrane pass occupies residues 161–181 (LFDLGIVDFAGGAVIHIVAGI). Topologically, residues 182 to 211 (TGACGSFLLGPRIGRFNQESGKPKNLPGHS) are cytoplasmic. Residues 212 to 232 (VVLMSLGAMILWYSWYGYTAG) form a helical membrane-spanning segment. Residues 233–249 (ASLGMTRSRVLPASRVS) lie on the Extracellular side of the membrane. Residues 250–270 (VVVTLSGATGLITVLGIGKIF) form a helical membrane-spanning segment. Residues 271–300 (NGHYDLVKGINGLIAGLVSSTSSCAYIEPW) lie on the Cytoplasmic side of the membrane. Residues 301 to 321 (AAIIIGFIGGIVYWFSSWALL) traverse the membrane as a helical segment. The Extracellular portion of the chain corresponds to 322–333 (NWLRLDDPVDST). The helical transmembrane segment at 334 to 354 (AIHLFGGCWSLISVAFFATHG) threads the bilayer. The Cytoplasmic portion of the chain corresponds to 355–357 (RVR). A helical membrane pass occupies residues 358 to 378 (NPDIILPGGIFYGGGISLLWV). Position 379 (Gln379) is a topological domain, extracellular. The helical transmembrane segment at 380 to 400 (LVGMVLAILWAGFLSGIFFFT) threads the bilayer. Over 401 to 431 (MDYFGKLRVDVDTELAGLDNSNHGGSAYIFD) the chain is Cytoplasmic.

The protein belongs to the ammonia transporter channel (TC 1.A.11.2) family.

The protein localises to the cell membrane. It localises to the endosome membrane. The protein resides in the cytoplasmic vesicle. Its subcellular location is the phagosome membrane. Its function is as follows. Ammonium transporter that mediates the import of ammonium in prespore cells. Controls ammonium homeostasis during growth and development. Ammonium has been shown to function as a morphogen at multiple steps during the development. May function as an ammonia sensor that relays information concerning ammonia concentrations to the signaling pathway involved in the slug versus culmination choice and regulates prestalk gene expression. The chain is Ammonium transporter 3 (amtC) from Dictyostelium discoideum (Social amoeba).